We begin with the raw amino-acid sequence, 432 residues long: Elongation factor 1-gamma (432 aa).

Residues 1–82 enclose the GST N-terminal domain; that stretch reads LYTYPENWRA…YVSNEELRGS (82 aa). One can recognise a GST C-terminal domain in the interval 83-211; it reads TPEAAAQVVQ…VKLCEKMAQF (129 aa). Lysine 142 and lysine 207 each carry N6-acetyllysine. A compositionally biased stretch (basic and acidic residues) spans 216-249; sequence FAESQPKKDTPRKEKGSREEKQKPQAERKEEKKA. The segment at 216–258 is disordered; the sequence is FAESQPKKDTPRKEKGSREEKQKPQAERKEEKKAAAPAPEEEL. Residue lysine 248 forms a Glycyl lysine isopeptide (Lys-Gly) (interchain with G-Cter in SUMO1) linkage. The region spanning 271 to 432 is the EF-1-gamma C-terminal domain; sequence AKDPFAHLPK…KAFNQGKIFK (162 aa). Lysine 280 participates in a covalent cross-link: Glycyl lysine isopeptide (Lys-Gly) (interchain with G-Cter in SUMO2). Lysine 396 is modified (N6-acetyllysine). Lysine 429 bears the N6-acetyllysine; alternate mark. Lysine 429 bears the N6-malonyllysine; alternate mark.

In terms of assembly, EF-1 is composed of four subunits: alpha, beta, delta, and gamma.

Probably plays a role in anchoring the complex to other cellular components. The chain is Elongation factor 1-gamma (EEF1G) from Sus scrofa (Pig).